A 394-amino-acid chain; its full sequence is Flavohemoprotein (394 aa).

The region spanning Met1–Glu136 is the Globin domain. Position 85 (His85) interacts with heme b. Catalysis depends on charge relay system residues Tyr95 and Glu135. Residues Gly147 to Val394 are reductase. The region spanning Arg150–Asp255 is the FAD-binding FR-type domain. FAD-binding positions include Tyr188 and Arg204 to Ser207. Gly268–Pro273 is a binding site for NADP(+). Cys387–Pro390 serves as a coordination point for FAD.

Belongs to the globin family. Two-domain flavohemoproteins subfamily. The protein in the C-terminal section; belongs to the flavoprotein pyridine nucleotide cytochrome reductase family. The cofactor is heme b. FAD is required as a cofactor.

It carries out the reaction 2 nitric oxide + NADPH + 2 O2 = 2 nitrate + NADP(+) + H(+). The catalysed reaction is 2 nitric oxide + NADH + 2 O2 = 2 nitrate + NAD(+) + H(+). Is involved in NO detoxification in an aerobic process, termed nitric oxide dioxygenase (NOD) reaction that utilizes O(2) and NAD(P)H to convert NO to nitrate, which protects the bacterium from various noxious nitrogen compounds. Therefore, plays a central role in the inducible response to nitrosative stress. The sequence is that of Flavohemoprotein from Vibrio vulnificus (strain CMCP6).